The sequence spans 437 residues: UDP-N-acetylmuramate--L-alanine ligase (437 aa).

108–114 provides a ligand contact to ATP; it reads GAHGKTS.

This sequence belongs to the MurCDEF family.

It is found in the cytoplasm. The catalysed reaction is UDP-N-acetyl-alpha-D-muramate + L-alanine + ATP = UDP-N-acetyl-alpha-D-muramoyl-L-alanine + ADP + phosphate + H(+). It functions in the pathway cell wall biogenesis; peptidoglycan biosynthesis. In terms of biological role, cell wall formation. The chain is UDP-N-acetylmuramate--L-alanine ligase from Staphylococcus aureus.